Reading from the N-terminus, the 454-residue chain is Nuclear distribution protein PAC1-1 (454 aa).

One can recognise a LisH domain in the interval 9–41 (QAEELHRALIAYLSSNNLTSTAAALRAEIGLGE). The disordered stretch occupies residues 71–93 (RHTSQLSNATPTSRQNKDPVNWL). Over residues 73–84 (TSQLSNATPTSR) the composition is skewed to polar residues. WD repeat units follow at residues 104-145 (SHRQ…RTIK), 147-187 (HTKT…KNIR), 191-236 (GHDH…CVKT), 239-278 (GHAEWVRDVCPSVDGRFILSTSDDYTSRLWDVSIANPEPK), 283-342 (GHEH…IKIL), 344-383 (GHDNWVRGLVFHPGGKYLLSASDDYTLRCWDLTQEGRCVK), and 388-450 (AHAH…LNVR).

The protein belongs to the WD repeat LIS1/nudF family. Self-associates. Interacts with NDL1 and dynein.

The protein localises to the cytoplasm. It localises to the cytoskeleton. It is found in the spindle pole. In terms of biological role, positively regulates the activity of the minus-end directed microtubule motor protein dynein. May enhance dynein-mediated microtubule sliding by targeting dynein to the microtubule plus end. Required for nuclear migration during vegetative growth as well as development. Required for retrograde early endosome (EE) transport from the hyphal tip. Required for localization of dynein to the mitotic spindle poles. Recruits additional proteins to the dynein complex at SPBs. The chain is Nuclear distribution protein PAC1-1 from Chaetomium globosum (strain ATCC 6205 / CBS 148.51 / DSM 1962 / NBRC 6347 / NRRL 1970) (Soil fungus).